Here is a 536-residue protein sequence, read N- to C-terminus: uncharacterized protein (536 aa).

Residues 71-98 (LFVIVKSGCSCPSGRICRHMLAVFLYVY) form an SWIM-type zinc finger. A coiled-coil region spans residues 482–528 (YKEAARYLKKLRTLYKKAKKQKVWERYIQLLSSHYKRLRALQEELQK).

This is an uncharacterized protein from Bacillus subtilis (strain 168).